The sequence spans 360 residues: Acetylxylan esterase / glucomannan deacetylase (360 aa).

A signal peptide spans 1-21; it reads MKPHALIGLLAGMLLSSSLYA. Ser-151 acts as the Nucleophile in catalysis.

The protein belongs to the carbohydrate esterase 2 (CE2) family.

Its subcellular location is the secreted. The enzyme catalyses Deacetylation of xylans and xylo-oligosaccharides.. It functions in the pathway glycan degradation; xylan degradation. Its function is as follows. Involved in the degradation of plant cell wall polysaccharides. Catalyzes the deacetylation of acetylated birchwood xylan and glucomannan, with a large preference for the latter, and of the synthetic substrate 4-nitrophenyl acetate (4-NPAc). This is Acetylxylan esterase / glucomannan deacetylase from Cellvibrio japonicus (strain Ueda107) (Pseudomonas fluorescens subsp. cellulosa).